The primary structure comprises 468 residues: Zinc finger CCCH domain-containing protein 32 (468 aa).

The segment at 1 to 25 is disordered; the sequence is MYARNPPLNGSQSAQAPDWTPADAD. 5 consecutive C3H1-type zinc fingers follow at residues 45–73, 90–118, 136–164, 289–317, and 335–363; these read RPGA…HPRD, RFGE…HPKN, REGD…HPQP, RPGE…HPRD, and RPGV…HPMG.

The protein localises to the nucleus. This Arabidopsis thaliana (Mouse-ear cress) protein is Zinc finger CCCH domain-containing protein 32.